Here is a 155-residue protein sequence, read N- to C-terminus: Small ribosomal subunit protein uS7cz/uS7cy (155 aa).

Belongs to the universal ribosomal protein uS7 family. In terms of assembly, part of the 30S ribosomal subunit.

The protein localises to the plastid. It localises to the chloroplast. Its function is as follows. One of the primary rRNA binding proteins, it binds directly to 16S rRNA where it nucleates assembly of the head domain of the 30S subunit. The chain is Small ribosomal subunit protein uS7cz/uS7cy (rps7-A) from Daucus carota (Wild carrot).